The primary structure comprises 513 residues: Lysine--tRNA ligase (513 aa).

Polar residues predominate over residues 1-11 (MTEPTQPNAAQ). Residues 1–22 (MTEPTQPNAAQPNVVPEVDDNK) are disordered. Positions 423 and 430 each coordinate Mg(2+).

This sequence belongs to the class-II aminoacyl-tRNA synthetase family. Homodimer. Mg(2+) serves as cofactor.

Its subcellular location is the cytoplasm. It carries out the reaction tRNA(Lys) + L-lysine + ATP = L-lysyl-tRNA(Lys) + AMP + diphosphate. The chain is Lysine--tRNA ligase from Paraburkholderia xenovorans (strain LB400).